The chain runs to 380 residues: Glucose-1-phosphate adenylyltransferase (380 aa).

Residues Gly-164, 179 to 180, and Ser-190 each bind alpha-D-glucose 1-phosphate; that span reads EK.

It belongs to the bacterial/plant glucose-1-phosphate adenylyltransferase family. In terms of assembly, homotetramer.

The catalysed reaction is alpha-D-glucose 1-phosphate + ATP + H(+) = ADP-alpha-D-glucose + diphosphate. Its pathway is glycan biosynthesis; glycogen biosynthesis. In terms of biological role, involved in the biosynthesis of ADP-glucose, a building block required for the elongation reactions to produce glycogen. Catalyzes the reaction between ATP and alpha-D-glucose 1-phosphate (G1P) to produce pyrophosphate and ADP-Glc. This chain is Glucose-1-phosphate adenylyltransferase, found in Ligilactobacillus salivarius (strain UCC118) (Lactobacillus salivarius).